The chain runs to 63 residues: Small ribosomal subunit protein bS21 (63 aa).

The protein belongs to the bacterial ribosomal protein bS21 family.

This is Small ribosomal subunit protein bS21 from Syntrophus aciditrophicus (strain SB).